Reading from the N-terminus, the 433-residue chain is Enolase (433 aa).

Gln-167 lines the (2R)-2-phosphoglycerate pocket. The Proton donor role is filled by Glu-209. 3 residues coordinate Mg(2+): Asp-246, Glu-291, and Asp-318. (2R)-2-phosphoglycerate contacts are provided by Lys-343, Arg-372, Ser-373, and Lys-394. Residue Lys-343 is the Proton acceptor of the active site.

Belongs to the enolase family. Component of the RNA degradosome, a multiprotein complex involved in RNA processing and mRNA degradation. Mg(2+) is required as a cofactor.

Its subcellular location is the cytoplasm. The protein localises to the secreted. The protein resides in the cell surface. The catalysed reaction is (2R)-2-phosphoglycerate = phosphoenolpyruvate + H2O. It participates in carbohydrate degradation; glycolysis; pyruvate from D-glyceraldehyde 3-phosphate: step 4/5. Catalyzes the reversible conversion of 2-phosphoglycerate (2-PG) into phosphoenolpyruvate (PEP). It is essential for the degradation of carbohydrates via glycolysis. In Aeromonas salmonicida (strain A449), this protein is Enolase.